Reading from the N-terminus, the 327-residue chain is GTPase Obg (327 aa).

In terms of domain architecture, Obg spans 1-159 (MQFIDQANII…WEVQLELKLL (159 aa)). The 168-residue stretch at 160–327 (AEVGIIGLPN…PLLSEVWKRI (168 aa)) folds into the OBG-type G domain. Residues 166-173 (GLPNAGKS), 191-195 (FTTLI), 213-216 (DIPG), 280-283 (NKME), and 309-311 (SSS) contribute to the ATP site. Residues Ser173 and Thr193 each coordinate Mg(2+).

The protein belongs to the TRAFAC class OBG-HflX-like GTPase superfamily. OBG GTPase family. As to quaternary structure, monomer. Requires Mg(2+) as cofactor.

Its subcellular location is the cytoplasm. An essential GTPase which binds GTP, GDP and possibly (p)ppGpp with moderate affinity, with high nucleotide exchange rates and a fairly low GTP hydrolysis rate. Plays a role in control of the cell cycle, stress response, ribosome biogenesis and in those bacteria that undergo differentiation, in morphogenesis control. This Prochlorococcus marinus subsp. pastoris (strain CCMP1986 / NIES-2087 / MED4) protein is GTPase Obg.